The sequence spans 288 residues: Acetyl-coenzyme A carboxylase carboxyl transferase subunit beta (288 aa).

One can recognise a CoA carboxyltransferase N-terminal domain in the interval 34–288; that stretch reads LFAKCPGCKQ…TLLSFHGGVQ (255 aa). Residues cysteine 38, cysteine 41, cysteine 56, and cysteine 59 each contribute to the Zn(2+) site. The C4-type zinc finger occupies 38 to 59; it reads CPGCKQAIYQKDLGQAKICPNC.

Belongs to the AccD/PCCB family. As to quaternary structure, acetyl-CoA carboxylase is a heterohexamer composed of biotin carboxyl carrier protein (AccB), biotin carboxylase (AccC) and two subunits each of ACCase subunit alpha (AccA) and ACCase subunit beta (AccD). Zn(2+) serves as cofactor.

Its subcellular location is the cytoplasm. It carries out the reaction N(6)-carboxybiotinyl-L-lysyl-[protein] + acetyl-CoA = N(6)-biotinyl-L-lysyl-[protein] + malonyl-CoA. Its pathway is lipid metabolism; malonyl-CoA biosynthesis; malonyl-CoA from acetyl-CoA: step 1/1. Its function is as follows. Component of the acetyl coenzyme A carboxylase (ACC) complex. Biotin carboxylase (BC) catalyzes the carboxylation of biotin on its carrier protein (BCCP) and then the CO(2) group is transferred by the transcarboxylase to acetyl-CoA to form malonyl-CoA. The chain is Acetyl-coenzyme A carboxylase carboxyl transferase subunit beta from Streptococcus thermophilus (strain ATCC BAA-491 / LMD-9).